A 508-amino-acid polypeptide reads, in one-letter code: GMP synthase [glutamine-hydrolyzing] (508 aa).

Positions 1–189 (MILVLDFGSQ…ALLVCDCEKT (189 aa)) constitute a Glutamine amidotransferase type-1 domain. The Nucleophile role is filled by Cys-78. Residues His-163 and Glu-165 contribute to the active site. The region spanning 190–383 (WGMQHFAQRE…LGISQDFLMR (194 aa)) is the GMPS ATP-PPase domain. 217–223 (SGGVDST) is an ATP binding site.

As to quaternary structure, homodimer.

It catalyses the reaction XMP + L-glutamine + ATP + H2O = GMP + L-glutamate + AMP + diphosphate + 2 H(+). Its pathway is purine metabolism; GMP biosynthesis; GMP from XMP (L-Gln route): step 1/1. In terms of biological role, catalyzes the synthesis of GMP from XMP. The chain is GMP synthase [glutamine-hydrolyzing] from Helicobacter pylori (strain HPAG1).